The primary structure comprises 833 residues: Zinc transporter ZIP10 (833 aa).

The signal sequence occupies residues 1–25 (MKVHIHTKFCLICLLTFIFHHCNHC). Residues 30–48 (DHGPEELHRHHRGMTESES) show a composition bias toward basic and acidic residues. 2 disordered regions span residues 30–54 (DHGP…FSVQ) and 137–167 (AENH…IKAD). Polar residues predominate over residues 137 to 147 (AENHTTTSVTS). Basic and acidic residues predominate over residues 152–167 (KCDPEKEAAELPIKAD). 2 N-linked (GlcNAc...) asparagine glycosylation sites follow: asparagine 191 and asparagine 198. The segment covering 200–209 (SVAHSEHGEP) has biased composition (basic and acidic residues). Disordered regions lie at residues 200–257 (SVAH…NHDH) and 271–335 (RVHS…EDDR). N-linked (GlcNAc...) asparagine glycosylation is present at asparagine 218. The span at 229-241 (VKVRRKEKGKRKK) shows a compositional bias: basic residues. Composition is skewed to basic and acidic residues over residues 281 to 315 (HLPE…EAPH) and 326 to 335 (SHKDQSEDDR). A glycan (N-linked (GlcNAc...) asparagine) is linked at asparagine 341. 2 helical membrane-spanning segments follow: residues 413–433 (IISI…VPII) and 440–460 (FLLT…ALLH). Residues 466–485 (QGGHDHSHQHTHGHGHSHGH) form a disordered region. Residues 497-517 (VLKGLVALGGIYLLFIIEHCI) traverse the membrane as a helical segment. Threonine 538 and threonine 555 each carry phosphothreonine. Serine 593 is modified (phosphoserine). The next 4 helical transmembrane spans lie at 689–709 (AIGA…IAVF), 734–754 (IVYN…GTAV), 761–781 (ITLW…LVDM), and 803–823 (FILQ…IALY).

The protein belongs to the ZIP transporter (TC 2.A.5) family. As to quaternary structure, interacts with SLC39A6. This interaction triggers cells to undergo EMT and mitosis. Found in a complex with SLC39A6, SLC39A10 and with the 'Ser-727' phosphorylated form of STAT3 throughout mitosis. Found in a complex with SLC39A6, SLC39A10 and with NCAM1; this complex controls NCAM1 phosphorylation and integration into focal adhesion complexes during epithelial-tomesenchymal transition. Found in a complex with SLC39A6, SLC39A10 and with GSK3B that controls NCAM1 phosphorylation. Post-translationally, undergoes N-terminal ectodomain shedding. As to expression, expressed in the liver, kidney and brain.

It localises to the cell membrane. Its subcellular location is the apical cell membrane. It catalyses the reaction Zn(2+)(in) = Zn(2+)(out). Its function is as follows. Zinc-influx transporter. When associated with SLC39A6, the heterodimer formed by SLC39A10 and SLC39A6 mediates cellular zinc uptake to trigger cells to undergo epithelial-to-mesenchymal transition (EMT). mediates cellular zinc uptake to trigger cells to undergo epithelial-to-mesenchymal transition (EMT). SLC39A10-SLC39A6 heterodimers play also an essentiel role in initiating mitosis by importing zinc into cells to initiate a pathway resulting in the onset of mitosis. Plays an important for both mature B-cell maintenance and humoral immune responses. When associated with SLC39A10, the heterodimer controls NCAM1 phosphorylation and integration into focal adhesion complexes during EMT. This chain is Zinc transporter ZIP10, found in Mus musculus (Mouse).